The sequence spans 374 residues: Queuine tRNA-ribosyltransferase (374 aa).

Residue Asp-91 is the Proton acceptor of the active site. Residues 91-95 (DSGGY), Asp-145, Gln-189, and Gly-216 contribute to the substrate site. Residues 247-253 (GVGTVPD) are RNA binding. Asp-266 functions as the Nucleophile in the catalytic mechanism. The RNA binding; important for wobble base 34 recognition stretch occupies residues 271-275 (TRNAR). Positions 304, 306, 309, and 335 each coordinate Zn(2+).

Belongs to the queuine tRNA-ribosyltransferase family. As to quaternary structure, homodimer. Within each dimer, one monomer is responsible for RNA recognition and catalysis, while the other monomer binds to the replacement base PreQ1. Zn(2+) serves as cofactor.

It catalyses the reaction 7-aminomethyl-7-carbaguanine + guanosine(34) in tRNA = 7-aminomethyl-7-carbaguanosine(34) in tRNA + guanine. Its pathway is tRNA modification; tRNA-queuosine biosynthesis. Its function is as follows. Catalyzes the base-exchange of a guanine (G) residue with the queuine precursor 7-aminomethyl-7-deazaguanine (PreQ1) at position 34 (anticodon wobble position) in tRNAs with GU(N) anticodons (tRNA-Asp, -Asn, -His and -Tyr). Catalysis occurs through a double-displacement mechanism. The nucleophile active site attacks the C1' of nucleotide 34 to detach the guanine base from the RNA, forming a covalent enzyme-RNA intermediate. The proton acceptor active site deprotonates the incoming PreQ1, allowing a nucleophilic attack on the C1' of the ribose to form the product. After dissociation, two additional enzymatic reactions on the tRNA convert PreQ1 to queuine (Q), resulting in the hypermodified nucleoside queuosine (7-(((4,5-cis-dihydroxy-2-cyclopenten-1-yl)amino)methyl)-7-deazaguanosine). The protein is Queuine tRNA-ribosyltransferase of Leptospira interrogans serogroup Icterohaemorrhagiae serovar Lai (strain 56601).